The primary structure comprises 221 residues: H-2 class II histocompatibility antigen, A-Q alpha chain (221 aa).

The alpha-1 stretch occupies residues Gly1–Asn76. Over Gly1 to Glu183 the chain is Extracellular. The alpha-2 stretch occupies residues Glu77–Trp170. Positions Pro79–Glu171 constitute an Ig-like C1-type domain. A disulfide bond links Cys99 and Cys155. A glycan (N-linked (GlcNAc...) asparagine) is linked at Asn110. The connecting peptide stretch occupies residues Glu171–Glu183. The chain crosses the membrane as a helical span at residues Thr184–Leu209. The Cytoplasmic portion of the chain corresponds to Arg210–Leu221.

This sequence belongs to the MHC class II family.

The protein resides in the membrane. The chain is H-2 class II histocompatibility antigen, A-Q alpha chain (H2-Aa) from Mus musculus (Mouse).